The sequence spans 552 residues: MSLSRSEEMHRLTENVYKTIMEQFNPSLRNFIAMGKNYEKALAGVTYAAKGYFDALVKMGELASESQGSKELGDVLFQMAEVHRQIQNQLEEMLKSFHNELLTQLEQKVELDSRYLSAALKKYQTEQRSKGDALDKCQAELKKLRKKSQGSKNPQKYSDKELQYIDAISNKQGELENYVSDGYKTALTEERRRFCFLVEKQCAVAKNSAAYHSKGKELLAQKLPLWQQACADPSKIPERAVQLMQQVASNGATLPSALSASKSNLVISDPIPGAKPLPVPPELAPFVGRMSAQESTPIMNGVTGPDGEDYSPWADRKAAQPKSLSPPQSQSKLSDSYSNTLPVRKSVTPKNSYATTENKTLPRSSSMAAGLERNGRMRVKAIFSHAAGDNSTLLSFKEGDLITLLVPEARDGWHYGESEKTKMRGWFPFSYTRVLDSDGSDRLHMSLQQGKSSSTGNLLDKDDLAIPPPDYGAASRAFPAQTASGFKQRPYSVAVPAFSQGLDDYGARSMSRNPFAHVQLKPTVTNDRCDLSAQGPEGREHGDGSARTLAGR.

Residues 1-250 (MSLSRSEEMH…VQLMQQVASN (250 aa)) form the IMD domain. The stretch at 132–153 (DALDKCQAELKKLRKKSQGSKN) forms a coiled coil. Serine 261 bears the Phosphoserine mark. Residues 295 to 369 (STPIMNGVTG…TLPRSSSMAA (75 aa)) form a disordered region. Threonine 296 is subject to Phosphothreonine. Residues 320 to 334 (QPKSLSPPQSQSKLS) show a composition bias toward low complexity. A phosphoserine mark is found at serine 323, serine 325, and serine 336. Residue threonine 340 is modified to Phosphothreonine. Position 346 is a phosphoserine (serine 346). Over residues 348-367 (TPKNSYATTENKTLPRSSSM) the composition is skewed to polar residues. At threonine 360 the chain carries Phosphothreonine. A phosphoserine mark is found at serine 366, serine 384, serine 395, and serine 454. The 64-residue stretch at 374–437 (NGRMRVKAIF…PFSYTRVLDS (64 aa)) folds into the SH3 domain. A compositionally biased stretch (polar residues) spans 447 to 457 (LQQGKSSSTGN). Disordered stretches follow at residues 447–466 (LQQG…DLAI) and 525–552 (TNDR…LAGR).

Homodimer. Interacts with CDC42 and RAC1 that have been activated by GTP binding. Interacts with ATN1, ADGRB1, EPS8, SHANK1, SHANK2, SHANK3, WASF1 and WASF2. Interacts with ENAH after recruitment of CDC42. Interacts with TIAM1 and DIAPH1. Interacts (via SH3 domain) with E.coli effector protein EspF(U) (via PXXP motifs). Interacts with E.coli intimin receptor Tir. Phosphorylated on tyrosine residues by INSR in response to insulin treatment. As to expression, isoform 1 and isoform 4 are expressed almost exclusively in brain. Isoform 4 is barely detectable in placenta, prostate and testis. A short isoform is ubiquitous, with the highest expression in liver, prostate, testis and placenta.

It is found in the cytoplasm. It localises to the membrane. The protein resides in the cell projection. The protein localises to the filopodium. Its subcellular location is the ruffle. It is found in the cytoskeleton. In terms of biological role, adapter protein that links membrane-bound small G-proteins to cytoplasmic effector proteins. Necessary for CDC42-mediated reorganization of the actin cytoskeleton and for RAC1-mediated membrane ruffling. Involved in the regulation of the actin cytoskeleton by WASF family members and the Arp2/3 complex. Plays a role in neurite growth. Acts syngeristically with ENAH to promote filipodia formation. Plays a role in the reorganization of the actin cytoskeleton in response to bacterial infection. Participates in actin bundling when associated with EPS8, promoting filopodial protrusions. The polypeptide is BAR/IMD domain-containing adapter protein 2 (BAIAP2) (Homo sapiens (Human)).